The chain runs to 286 residues: ATP synthase gamma chain (286 aa).

It belongs to the ATPase gamma chain family. As to quaternary structure, F-type ATPases have 2 components, CF(1) - the catalytic core - and CF(0) - the membrane proton channel. CF(1) has five subunits: alpha(3), beta(3), gamma(1), delta(1), epsilon(1). CF(0) has three main subunits: a, b and c.

The protein localises to the cell inner membrane. In terms of biological role, produces ATP from ADP in the presence of a proton gradient across the membrane. The gamma chain is believed to be important in regulating ATPase activity and the flow of protons through the CF(0) complex. This Pseudomonas aeruginosa (strain UCBPP-PA14) protein is ATP synthase gamma chain.